Consider the following 68-residue polypeptide: MRCVPVFIILLVLIASAPSVDARPQTKDDALASFRDSIKRHLQTLLDARECCPQSPPCCHYYYYGSWK.

Positions 1 to 22 (MRCVPVFIILLVLIASAPSVDA) are cleaved as a signal peptide. Residues 23–49 (RPQTKDDALASFRDSIKRHLQTLLDAR) constitute a propeptide that is removed on maturation.

It belongs to the conotoxin T superfamily. Contains 2 disulfide bonds that can be either 'C1-C3, C2-C4' or 'C1-C4, C2-C3', since these disulfide connectivities have been observed for conotoxins with cysteine framework V (for examples, see AC P0DQQ7 and AC P81755). As to expression, expressed by the venom duct.

It localises to the secreted. This Conus pulicarius (Flea-bitten cone) protein is Conotoxin Pu5.5.